A 1197-amino-acid polypeptide reads, in one-letter code: Serine/threonine-protein kinase pakA (1197 aa).

Disordered stretches follow at residues 1 to 96 (MEEK…PIYR), 328 to 383 (QKED…KNID), 430 to 468 (REEE…EQRN), 485 to 543 (EEEE…NLMG), and 562 to 819 (NSSG…RVGT). Residues 19 to 30 (QKFEQFLDKTDK) show a composition bias toward basic and acidic residues. Polar residues predominate over residues 34-49 (ATRNNYRGPVSSSTGI). Residues 51-69 (NDKEKKSHSYFKVREEGSN) are compositionally biased toward basic and acidic residues. Positions 70 to 79 (KRPSSFSASN) are enriched in polar residues. 2 stretches are compositionally biased toward low complexity: residues 80–94 (PITP…SSPI) and 346–381 (NNNN…NNKN). A compositionally biased stretch (basic and acidic residues) spans 439–458 (RVERELASRRRQEEDRIKRE). Residues 494 to 523 (SQLQSSQQQQKSSSTQRSSNTVTSTSSSST) are compositionally biased toward low complexity. The segment covering 524 to 536 (GGDSNPSTSQKPT) has biased composition (polar residues). Residue Thr585 is modified to Phosphothreonine; by PKB. A compositionally biased stretch (polar residues) spans 593–615 (SENTPLVSSIDNNGVNNKMSRSH). Low complexity-rich tracts occupy residues 636–653 (NVNN…NNNH) and 671–707 (SSSM…SSPT). A compositionally biased stretch (polar residues) spans 718–727 (TTSTGSTRKG). The span at 728–737 (SISEREDKKK) shows a compositional bias: basic and acidic residues. Over residues 739–756 (SSSSTSSSSSSNGGLSSS) the composition is skewed to low complexity. A compositionally biased stretch (basic and acidic residues) spans 757–790 (GKDHKKDHSSEEKEKEKKSFFNKLFSKEKKDHHS). The CRIB domain maps to 817–830 (VGTPFNVKHDVHVN). Residues 911 to 1164 (YYNINKIGEG…SSSLLHHPFL (254 aa)) form the Protein kinase domain. Residues 917-925 (IGEGGAGEV) and Lys940 contribute to the ATP site. Asp1032 (proton acceptor) is an active-site residue.

This sequence belongs to the protein kinase superfamily. STE Ser/Thr protein kinase family. STE20 subfamily. It depends on Mg(2+) as a cofactor. Post-translationally, phosphorylation on Thr-585 results in cAMP-mediated activation and localization to the cytoskeleton. As to expression, colocalizes with myosin II to the cleavage furrow of cells undergoing cytokinesis and the posterior cortex of polarized cells.

It is found in the cytoplasm. It localises to the cytosol. Its subcellular location is the cytoskeleton. The enzyme catalyses L-seryl-[protein] + ATP = O-phospho-L-seryl-[protein] + ADP + H(+). It catalyses the reaction L-threonyl-[protein] + ATP = O-phospho-L-threonyl-[protein] + ADP + H(+). Its function is as follows. Regulator of the myosin II component of the cytoskeleton: required for regulation of cytokinesis. Functions during chemotaxis, required for maintaining the direction of cell movement, suppressing lateral pseudopod extension, and proper retraction of the posterior of chemotaxing cells. This is Serine/threonine-protein kinase pakA (pakA) from Dictyostelium discoideum (Social amoeba).